We begin with the raw amino-acid sequence, 516 residues long: L-amino-acid oxidase (516 aa).

Residues 1-18 (MNVFFMFSLLFLAALGSC) form the signal peptide. An intrachain disulfide couples C28 to C189. FAD-binding positions include 61 to 62 (MS), 81 to 82 (EA), R89, and 103 to 106 (GPMR). 2 residues coordinate substrate: R106 and H239. V279 contacts FAD. C349 and C430 are joined by a disulfide. N-linked (GlcNAc...) asparagine glycosylation occurs at N379. Y390 lines the substrate pocket. FAD-binding positions include E475 and 482–487 (GWIDST). Position 482–483 (482–483 (GW)) interacts with substrate.

It belongs to the flavin monoamine oxidase family. FIG1 subfamily. As to quaternary structure, homodimer; non-covalently linked. FAD serves as cofactor. In terms of processing, N-glycosylated. In terms of tissue distribution, expressed by the venom gland.

Its subcellular location is the secreted. The catalysed reaction is an L-alpha-amino acid + O2 + H2O = a 2-oxocarboxylate + H2O2 + NH4(+). Functionally, catalyzes an oxidative deamination of predominantly hydrophobic and aromatic L-amino acids, thus producing hydrogen peroxide that may contribute to the diverse toxic effects of this enzyme. Exhibits diverse biological activities, such as hemorrhage, hemolysis, edema, apoptosis of vascular endothelial cells or tumor cell lines, antibacterial and antiparasitic activities, as well as regulation of platelet aggregation. Effects of snake L-amino oxidases on platelets are controversial, since they either induce aggregation or inhibit agonist-induced aggregation. These different effects are probably due to different experimental conditions. The polypeptide is L-amino-acid oxidase (Sistrurus catenatus edwardsii (Desert massasauga)).